The sequence spans 334 residues: Catabolite repressor/activator (334 aa).

Positions 1–58 (MKLDEIARLAGVSRTTASYVINGKAKQYRVSDKTVEKVMAVVREHNYHPNAVAAGLRA) constitute an HTH lacI-type domain. A DNA-binding region (H-T-H motif) is located at residues 3-22 (LDEIARLAGVSRTTASYVIN).

As to quaternary structure, homotetramer.

Its function is as follows. Global transcriptional regulator, which plays an important role in the regulation of carbon metabolism. This is Catabolite repressor/activator (cra) from Salmonella typhimurium (strain LT2 / SGSC1412 / ATCC 700720).